The sequence spans 370 residues: Ornithine carbamoyltransferase, mitochondrial (370 aa).

The N-terminal 38 residues, methionine 1–threonine 38, are a transit peptide targeting the mitochondrion. Carbamoyl phosphate-binding positions include serine 97–threonine 100, arginine 148, histidine 175, and glutamine 178. Residues asparagine 216, aspartate 282, serine 286, and methionine 287 each coordinate L-ornithine. Cysteine 324 (proton acceptor) is an active-site residue. Carbamoyl phosphate contacts are provided by residues cysteine 324–leucine 325 and arginine 351.

Belongs to the aspartate/ornithine carbamoyltransferase superfamily. OTCase family. As to quaternary structure, homotrimer.

The protein resides in the mitochondrion matrix. It carries out the reaction carbamoyl phosphate + L-ornithine = L-citrulline + phosphate + H(+). The protein operates within amino-acid biosynthesis; L-arginine biosynthesis; L-arginine from L-ornithine and carbamoyl phosphate: step 1/3. In Aspergillus niger, this protein is Ornithine carbamoyltransferase, mitochondrial (argB).